A 502-amino-acid chain; its full sequence is Cytochrome P450 71B16 (502 aa).

The chain crosses the membrane as a helical span at residues 1 to 21 (MAISLLCLFLITLVSLIFVVK). Cys444 contacts heme.

The protein belongs to the cytochrome P450 family. Requires heme as cofactor.

The protein resides in the membrane. The sequence is that of Cytochrome P450 71B16 (CYP71B16) from Arabidopsis thaliana (Mouse-ear cress).